Here is a 381-residue protein sequence, read N- to C-terminus: DNA repair protein RAD51 homolog 3 (381 aa).

The tract at residues 1–24 (MDEDINKDTNNNNNTTDSNNNNNN) is disordered. Low complexity predominate over residues 8–24 (DTNNNNNTTDSNNNNNN). Position 89 to 96 (89 to 96 (GVPGIGKT)) interacts with ATP. The tract at residues 313–381 (GFNHPPPLNP…NDENEMYIEN (69 aa)) is disordered. Residues 323–377 (EDQEQEKEKEKRKKKNNNNNNNNNNNNNNNNNNNNNNNNNNNNNNNNKNNDENEM) adopt a coiled-coil conformation. A compositionally biased stretch (low complexity) spans 339–370 (NNNNNNNNNNNNNNNNNNNNNNNNNNNNNNNK).

It belongs to the RecA family. RAD51 subfamily.

The protein resides in the nucleus. Functionally, involved in the homologous recombination repair (HRR) pathway of double-stranded DNA breaks arising during DNA replication or induced by DNA-damaging agents. The polypeptide is DNA repair protein RAD51 homolog 3 (rad51c) (Dictyostelium discoideum (Social amoeba)).